Here is a 279-residue protein sequence, read N- to C-terminus: Putative pyruvate, phosphate dikinase regulatory protein (279 aa).

Position 152–159 (glycine 152–serine 159) interacts with ADP.

Belongs to the pyruvate, phosphate/water dikinase regulatory protein family. PDRP subfamily.

It carries out the reaction N(tele)-phospho-L-histidyl/L-threonyl-[pyruvate, phosphate dikinase] + ADP = N(tele)-phospho-L-histidyl/O-phospho-L-threonyl-[pyruvate, phosphate dikinase] + AMP + H(+). The catalysed reaction is N(tele)-phospho-L-histidyl/O-phospho-L-threonyl-[pyruvate, phosphate dikinase] + phosphate + H(+) = N(tele)-phospho-L-histidyl/L-threonyl-[pyruvate, phosphate dikinase] + diphosphate. Functionally, bifunctional serine/threonine kinase and phosphorylase involved in the regulation of the pyruvate, phosphate dikinase (PPDK) by catalyzing its phosphorylation/dephosphorylation. The polypeptide is Putative pyruvate, phosphate dikinase regulatory protein (Anaplasma marginale (strain Florida)).